Reading from the N-terminus, the 479-residue chain is 3-phytase B (479 aa).

An N-terminal signal peptide occupies residues 1–19; it reads MPRTSLLTLACALATGASA. Histidine 82 acts as the Nucleophile in catalysis. N-linked (GlcNAc...) asparagine glycosylation is found at asparagine 106, asparagine 191, asparagine 227, asparagine 250, and asparagine 315. Aspartate 338 (proton donor) is an active-site residue. 3 N-linked (GlcNAc...) asparagine glycosylation sites follow: asparagine 425, asparagine 442, and asparagine 458.

It belongs to the histidine acid phosphatase family.

It catalyses the reaction 1D-myo-inositol hexakisphosphate + H2O = 1D-myo-inositol 1,2,4,5,6-pentakisphosphate + phosphate. Its function is as follows. Catalyzes the hydrolysis of inorganic orthophosphate from phytate. This is 3-phytase B (phyB) from Aspergillus niger.